We begin with the raw amino-acid sequence, 90 residues long: Auxin-responsive protein SAUR22 (90 aa).

Belongs to the ARG7 family.

It localises to the cell membrane. Its function is as follows. Functions as a positive effector of cell expansion through modulation of auxin transport. This is Auxin-responsive protein SAUR22 from Arabidopsis thaliana (Mouse-ear cress).